The chain runs to 274 residues: 3-methyl-2-oxobutanoate hydroxymethyltransferase (274 aa).

Residues Asp-49 and Asp-88 each coordinate Mg(2+). Residues 49–50 (DS), Asp-88, and Lys-118 contribute to the 3-methyl-2-oxobutanoate site. Residue Glu-120 participates in Mg(2+) binding. Glu-187 serves as the catalytic Proton acceptor.

This sequence belongs to the PanB family. Homodecamer; pentamer of dimers. Mg(2+) serves as cofactor.

The protein resides in the cytoplasm. It catalyses the reaction 3-methyl-2-oxobutanoate + (6R)-5,10-methylene-5,6,7,8-tetrahydrofolate + H2O = 2-dehydropantoate + (6S)-5,6,7,8-tetrahydrofolate. The protein operates within cofactor biosynthesis; (R)-pantothenate biosynthesis; (R)-pantoate from 3-methyl-2-oxobutanoate: step 1/2. In terms of biological role, catalyzes the reversible reaction in which hydroxymethyl group from 5,10-methylenetetrahydrofolate is transferred onto alpha-ketoisovalerate to form ketopantoate. This is 3-methyl-2-oxobutanoate hydroxymethyltransferase from Nitrobacter winogradskyi (strain ATCC 25391 / DSM 10237 / CIP 104748 / NCIMB 11846 / Nb-255).